The primary structure comprises 135 residues: Serine protease inhibitor swm-1 (135 aa).

The first 16 residues, 1–16 (MRILVIITCIVAVATA), serve as a signal peptide directing secretion. Cystine bridges form between C20/C53, C29/C48, C33/C44, C37/C73, C55/C67, C80/C114, C89/C109, C93/C105, C97/C133, and C116/C127. TIL domains lie at 20-73 (CEAN…VSEC) and 80-133 (CPEN…KKDC). An N-linked (GlcNAc...) asparagine glycan is attached at N83.

In terms of tissue distribution, in male, expressed in the vas deferens cuboidal cells and, in posterior body wall and male-specific diagonal muscles. In hermaphrodites, expressed in posterior body wall muscles and spermatheca.

It localises to the secreted. The protein resides in the cytoplasmic vesicle. The protein localises to the secretory vesicle lumen. Functionally, serine protease inhibitor. Probably by inhibiting serine protease tyr-5 in males, prevents the maturation of spermatids into mature motile spermatozoa until their transfer into a hermaphrodite. Also required for efficient sperm transfer and thus for male fertility. The polypeptide is Serine protease inhibitor swm-1 (Caenorhabditis elegans).